The following is a 187-amino-acid chain: MAIKSVLYDKYKKDVTKSLMKEFNYKSTMEIPRLEKIVINSGLGDATSDSKIVEIGLKELHLITGQKPIATKSKKSIATFKLREGQAIGAKVTLRRENMWNFLTKLISIAIPRIRDFRGLSTKSFDGNGNYTFGIKEQIIFPEIVYDDVKKLRGFDITIVTSAKTDKEAMFLLKELGMPFVKTKEAK.

The protein belongs to the universal ribosomal protein uL5 family. As to quaternary structure, part of the 50S ribosomal subunit; part of the 5S rRNA/L5/L18/L25 subcomplex. Contacts the 5S rRNA and the P site tRNA. Forms a bridge to the 30S subunit in the 70S ribosome.

Functionally, this is one of the proteins that bind and probably mediate the attachment of the 5S RNA into the large ribosomal subunit, where it forms part of the central protuberance. In the 70S ribosome it contacts protein S13 of the 30S subunit (bridge B1b), connecting the 2 subunits; this bridge is implicated in subunit movement. Contacts the P site tRNA; the 5S rRNA and some of its associated proteins might help stabilize positioning of ribosome-bound tRNAs. The chain is Large ribosomal subunit protein uL5 from Malacoplasma penetrans (strain HF-2) (Mycoplasma penetrans).